The following is a 200-amino-acid chain: Dephospho-CoA kinase (200 aa).

In terms of domain architecture, DPCK spans Val3–Arg200. Gly11–Thr16 provides a ligand contact to ATP.

It belongs to the CoaE family.

It localises to the cytoplasm. The catalysed reaction is 3'-dephospho-CoA + ATP = ADP + CoA + H(+). The protein operates within cofactor biosynthesis; coenzyme A biosynthesis; CoA from (R)-pantothenate: step 5/5. Catalyzes the phosphorylation of the 3'-hydroxyl group of dephosphocoenzyme A to form coenzyme A. The chain is Dephospho-CoA kinase from Brucella abortus (strain 2308).